The following is a 248-amino-acid chain: Cell division protein ZapD (248 aa).

The protein belongs to the ZapD family. As to quaternary structure, interacts with FtsZ.

The protein localises to the cytoplasm. Its function is as follows. Cell division factor that enhances FtsZ-ring assembly. Directly interacts with FtsZ and promotes bundling of FtsZ protofilaments, with a reduction in FtsZ GTPase activity. The polypeptide is Cell division protein ZapD (Aliivibrio salmonicida (strain LFI1238) (Vibrio salmonicida (strain LFI1238))).